The chain runs to 291 residues: Polyamine aminopropyltransferase (291 aa).

The PABS domain occupies 5–245 (PGPVSLIEPL…YAVNYIIGSL (241 aa)). Residue Q36 participates in S-methyl-5'-thioadenosine binding. Spermidine contacts are provided by H67 and E91. Residues D111 and 143 to 144 (DG) contribute to the S-methyl-5'-thioadenosine site. D164 functions as the Proton acceptor in the catalytic mechanism.

The protein belongs to the spermidine/spermine synthase family. In terms of assembly, homodimer or homotetramer.

Its subcellular location is the cytoplasm. The catalysed reaction is S-adenosyl 3-(methylsulfanyl)propylamine + putrescine = S-methyl-5'-thioadenosine + spermidine + H(+). It participates in amine and polyamine biosynthesis; spermidine biosynthesis; spermidine from putrescine: step 1/1. Its function is as follows. Catalyzes the irreversible transfer of a propylamine group from the amino donor S-adenosylmethioninamine (decarboxy-AdoMet) to putrescine (1,4-diaminobutane) to yield spermidine. The chain is Polyamine aminopropyltransferase from Pyrobaculum islandicum (strain DSM 4184 / JCM 9189 / GEO3).